The following is a 1890-amino-acid chain: Putative aminopeptidase-2 (1890 aa).

The N-terminal stretch at 1-20 is a signal peptide; sequence MRRKLLLLLCFIGLFSLIST. N-linked (GlcNAc...) asparagine glycosylation occurs at asparagine 110. Residues glutamate 220 and 354–358 contribute to the substrate site; that span reads GAMEN. Histidine 390 is a binding site for Zn(2+). Glutamate 391 serves as the catalytic Proton acceptor. Zn(2+) contacts are provided by histidine 394 and glutamate 413. Asparagine 534, asparagine 581, asparagine 785, asparagine 803, asparagine 914, asparagine 1024, and asparagine 1094 each carry an N-linked (GlcNAc...) asparagine glycan. Glutamate 1143 contacts substrate. Residue asparagine 1245 is glycosylated (N-linked (GlcNAc...) asparagine). Residue 1280 to 1284 coordinates substrate; it reads GAMEN. Position 1316 (histidine 1316) interacts with Zn(2+). The Proton acceptor role is filled by glutamate 1317. Residues histidine 1320 and glutamate 1339 each coordinate Zn(2+). 4 N-linked (GlcNAc...) asparagine glycosylation sites follow: asparagine 1451, asparagine 1521, asparagine 1826, and asparagine 1841.

The protein belongs to the peptidase M1 family. Requires Zn(2+) as cofactor.

In terms of biological role, putative aminopeptidase which plays a role in oocyte maturation. The chain is Putative aminopeptidase-2 from Caenorhabditis elegans.